The primary structure comprises 754 residues: RNA exonuclease 5 (754 aa).

The interval 1 to 36 (MELEEEENPRKRKETPNSALTTELDRPSWDVQDPEP) is disordered. One can recognise an Exonuclease domain in the interval 222 to 370 (LFGLDCEVCL…EDARTALELV (149 aa)). 2 RRM domains span residues 488-562 (STIY…RLLT) and 583-662 (GTIY…RHLQ).

This Rattus norvegicus (Rat) protein is RNA exonuclease 5 (Rexo5).